Reading from the N-terminus, the 619-residue chain is Dihydroxy-acid dehydratase (619 aa).

Asp81 contacts Mg(2+). Cys122 lines the [2Fe-2S] cluster pocket. Asp123 and Lys124 together coordinate Mg(2+). Lys124 bears the N6-carboxylysine mark. Cys198 contacts [2Fe-2S] cluster. Position 494 (Glu494) interacts with Mg(2+). The active-site Proton acceptor is Ser520.

It belongs to the IlvD/Edd family. In terms of assembly, homodimer. [2Fe-2S] cluster serves as cofactor. The cofactor is Mg(2+).

It catalyses the reaction (2R)-2,3-dihydroxy-3-methylbutanoate = 3-methyl-2-oxobutanoate + H2O. The enzyme catalyses (2R,3R)-2,3-dihydroxy-3-methylpentanoate = (S)-3-methyl-2-oxopentanoate + H2O. The protein operates within amino-acid biosynthesis; L-isoleucine biosynthesis; L-isoleucine from 2-oxobutanoate: step 3/4. It participates in amino-acid biosynthesis; L-valine biosynthesis; L-valine from pyruvate: step 3/4. Functionally, functions in the biosynthesis of branched-chain amino acids. Catalyzes the dehydration of (2R,3R)-2,3-dihydroxy-3-methylpentanoate (2,3-dihydroxy-3-methylvalerate) into 2-oxo-3-methylpentanoate (2-oxo-3-methylvalerate) and of (2R)-2,3-dihydroxy-3-methylbutanoate (2,3-dihydroxyisovalerate) into 2-oxo-3-methylbutanoate (2-oxoisovalerate), the penultimate precursor to L-isoleucine and L-valine, respectively. This chain is Dihydroxy-acid dehydratase, found in Neisseria meningitidis serogroup A / serotype 4A (strain DSM 15465 / Z2491).